We begin with the raw amino-acid sequence, 71 residues long: MQVEETSIEEIQTKIKRLNSKAGQMKMDLHDLAEGLPTDYTQLMDVAAATYEIYRQLDELKQELKKLENAK.

This sequence belongs to the UPF0437 family.

The chain is UPF0437 protein asl1434 from Nostoc sp. (strain PCC 7120 / SAG 25.82 / UTEX 2576).